The sequence spans 922 residues: Golgi-associated RAB2 interactor protein 5B (922 aa).

6 disordered regions span residues 244 to 264, 292 to 317, 373 to 404, 424 to 597, 758 to 830, and 842 to 869; these read DVRK…DRTH, QSSP…SPSH, TPYS…KAPS, AVPA…TQET, QPES…LRPS, and ATAR…LATV. Polar residues predominate over residues 292 to 305; sequence QSSPKACTSASDEA. A compositionally biased stretch (pro residues) spans 431–441; the sequence is KPPPGLAPPQK. 2 stretches are compositionally biased toward low complexity: residues 442–458 and 471–495; these read APAA…VPAP and KAPA…ASAV. Residues 496–507 are compositionally biased toward pro residues; sequence PAPPQKTPPPSQ. Basic and acidic residues predominate over residues 758–788; the sequence is QPESHTWVKEGKRPWGEMKEQPWGEMKEPPW.

This sequence belongs to the GARIN family.

The sequence is that of Golgi-associated RAB2 interactor protein 5B from Homo sapiens (Human).